The primary structure comprises 247 residues: Oil body-associated protein 2A (247 aa).

The segment at 1 to 26 (MASSDERPGAYPARDGSENLPPGDPK) is disordered.

This sequence belongs to the OBAP family.

This Arabidopsis thaliana (Mouse-ear cress) protein is Oil body-associated protein 2A.